The sequence spans 319 residues: 4-hydroxy-3-methylbut-2-enyl diphosphate reductase (319 aa).

Cys12 contributes to the [4Fe-4S] cluster binding site. 2 residues coordinate (2E)-4-hydroxy-3-methylbut-2-enyl diphosphate: His41 and His74. Residues His41 and His74 each contribute to the dimethylallyl diphosphate site. Isopentenyl diphosphate contacts are provided by His41 and His74. [4Fe-4S] cluster is bound at residue Cys97. Position 125 (His125) interacts with (2E)-4-hydroxy-3-methylbut-2-enyl diphosphate. Residue His125 participates in dimethylallyl diphosphate binding. His125 contributes to the isopentenyl diphosphate binding site. The active-site Proton donor is Glu127. Thr168 is a binding site for (2E)-4-hydroxy-3-methylbut-2-enyl diphosphate. Position 198 (Cys198) interacts with [4Fe-4S] cluster. (2E)-4-hydroxy-3-methylbut-2-enyl diphosphate contacts are provided by Ser226, Ser227, Asn228, and Ser270. Residues Ser226, Ser227, Asn228, and Ser270 each coordinate dimethylallyl diphosphate. Isopentenyl diphosphate contacts are provided by Ser226, Ser227, Asn228, and Ser270.

The protein belongs to the IspH family. Homodimer. [4Fe-4S] cluster is required as a cofactor.

The catalysed reaction is isopentenyl diphosphate + 2 oxidized [2Fe-2S]-[ferredoxin] + H2O = (2E)-4-hydroxy-3-methylbut-2-enyl diphosphate + 2 reduced [2Fe-2S]-[ferredoxin] + 2 H(+). It carries out the reaction dimethylallyl diphosphate + 2 oxidized [2Fe-2S]-[ferredoxin] + H2O = (2E)-4-hydroxy-3-methylbut-2-enyl diphosphate + 2 reduced [2Fe-2S]-[ferredoxin] + 2 H(+). The protein operates within isoprenoid biosynthesis; dimethylallyl diphosphate biosynthesis; dimethylallyl diphosphate from (2E)-4-hydroxy-3-methylbutenyl diphosphate: step 1/1. It participates in isoprenoid biosynthesis; isopentenyl diphosphate biosynthesis via DXP pathway; isopentenyl diphosphate from 1-deoxy-D-xylulose 5-phosphate: step 6/6. Catalyzes the conversion of 1-hydroxy-2-methyl-2-(E)-butenyl 4-diphosphate (HMBPP) into a mixture of isopentenyl diphosphate (IPP) and dimethylallyl diphosphate (DMAPP). Acts in the terminal step of the DOXP/MEP pathway for isoprenoid precursor biosynthesis. In Hamiltonella defensa subsp. Acyrthosiphon pisum (strain 5AT), this protein is 4-hydroxy-3-methylbut-2-enyl diphosphate reductase.